A 614-amino-acid chain; its full sequence is Probable Xaa-Pro aminopeptidase P (614 aa).

Mn(2+)-binding residues include Asp409, Asp420, Glu518, and Glu532.

The protein belongs to the peptidase M24B family. Mn(2+) serves as cofactor.

It carries out the reaction Release of any N-terminal amino acid, including proline, that is linked to proline, even from a dipeptide or tripeptide.. Its function is as follows. Catalyzes the removal of a penultimate prolyl residue from the N-termini of peptides. This is Probable Xaa-Pro aminopeptidase P (ampp) from Aspergillus niger (strain ATCC MYA-4892 / CBS 513.88 / FGSC A1513).